Reading from the N-terminus, the 88-residue chain is Acylphosphatase (88 aa).

The Acylphosphatase-like domain occupies 3 to 88 (AARFVVSGVV…VPPTEDFVTG (86 aa)). Residues R18 and N36 contribute to the active site.

This sequence belongs to the acylphosphatase family.

The enzyme catalyses an acyl phosphate + H2O = a carboxylate + phosphate + H(+). The chain is Acylphosphatase (acyP) from Xanthomonas euvesicatoria pv. vesicatoria (strain 85-10) (Xanthomonas campestris pv. vesicatoria).